A 187-amino-acid polypeptide reads, in one-letter code: Large ribosomal subunit protein uL6c (187 aa).

The protein belongs to the universal ribosomal protein uL6 family. Part of the 50S ribosomal subunit.

Its subcellular location is the plastid. It is found in the chloroplast. Binds 23S rRNA. This Thalassiosira pseudonana (Marine diatom) protein is Large ribosomal subunit protein uL6c (rpl6).